The chain runs to 59 residues: Large ribosomal subunit protein uL30 (59 aa).

It belongs to the universal ribosomal protein uL30 family. As to quaternary structure, part of the 50S ribosomal subunit.

The polypeptide is Large ribosomal subunit protein uL30 (Leptospira borgpetersenii serovar Hardjo-bovis (strain JB197)).